We begin with the raw amino-acid sequence, 148 residues long: Ubiquitin-conjugating enzyme E2 4 (148 aa).

The interval 1–22 (MSSSKRIAKELSDLERDPPTSC) is disordered. The 147-residue stretch at 2-148 (SSSKRIAKEL…AREWTKKYAV (147 aa)) folds into the UBC core domain. Residues 7-18 (IAKELSDLERDP) are compositionally biased toward basic and acidic residues. S12 is modified (phosphoserine). C86 serves as the catalytic Glycyl thioester intermediate. K91 is covalently cross-linked (Glycyl lysine isopeptide (Lys-Gly) (interchain with G-Cter in ubiquitin)).

It belongs to the ubiquitin-conjugating enzyme family. As to quaternary structure, interacts with TUL1. In terms of processing, the N-terminus is blocked.

The enzyme catalyses S-ubiquitinyl-[E1 ubiquitin-activating enzyme]-L-cysteine + [E2 ubiquitin-conjugating enzyme]-L-cysteine = [E1 ubiquitin-activating enzyme]-L-cysteine + S-ubiquitinyl-[E2 ubiquitin-conjugating enzyme]-L-cysteine.. Its pathway is protein modification; protein ubiquitination. In terms of biological role, E2 ubiquitin-conjugating enzyme that catalyzes the covalent attachment of ubiquitin to other proteins. Mediates the selective degradation of short-lived and abnormal proteins. Mediates ubiquitination of PEX5. This Saccharomyces cerevisiae (strain ATCC 204508 / S288c) (Baker's yeast) protein is Ubiquitin-conjugating enzyme E2 4.